A 378-amino-acid polypeptide reads, in one-letter code: Lysocardiolipin acyltransferase 1 (378 aa).

2 consecutive transmembrane segments (helical) span residues 9-29 (FVVA…GPFL) and 46-66 (IVAT…GAKV). The short motif at 85 to 90 (HRTRMD) is the HXXXXD motif element. Transmembrane regions (helical) follow at residues 302-322 (LRVL…PMGT) and 336-358 (FAAM…LIEL).

This sequence belongs to the 1-acyl-sn-glycerol-3-phosphate acyltransferase family.

It localises to the endoplasmic reticulum membrane. The enzyme catalyses a 1-acyl-sn-glycero-3-phosphate + an acyl-CoA = a 1,2-diacyl-sn-glycero-3-phosphate + CoA. It catalyses the reaction a 1-acyl-sn-glycero-3-phospho-(1D-myo-inositol) + an acyl-CoA = a 1,2-diacyl-sn-glycero-3-phospho-(1D-myo-inositol) + CoA. It carries out the reaction 1-acyl-sn-glycero-3-phospho-(1'-sn-glycerol) + an acyl-CoA = a 1,2-diacyl-sn-glycero-3-phospho-(1'-sn-glycerol) + CoA. The catalysed reaction is 1-hexadecanoyl-sn-glycero-3-phosphate + (9Z)-octadecenoyl-CoA = 1-hexadecanoyl-2-(9Z-octadecenoyl)-sn-glycero-3-phosphate + CoA. The enzyme catalyses 1-(9Z-octadecenoyl)-sn-glycero-3-phosphate + (9Z)-octadecenoyl-CoA = 1,2-di-(9Z-octadecenoyl)-sn-glycero-3-phosphate + CoA. It catalyses the reaction 1-(9Z,12Z)-octadecadienoyl-sn-glycero-3-phosphate + (9Z)-octadecenoyl-CoA = 1-(9Z,12Z)-octadecadienoyl-2-(9Z)-octadecenoyl-sn-glycero-3-phosphate + CoA. It carries out the reaction 1-(9Z,12Z,15Z)-octadecatrienoyl-sn-glycero-3-phosphate + (9Z)-octadecenoyl-CoA = 1-(9Z,12Z,15Z)-octadecatrienoyl-2-(9Z)-octadecenoyl-sn-glycero-3-phosphate + CoA. The catalysed reaction is 1-(9Z-octadecenoyl)-sn-glycero-3-phosphate + hexadecanoyl-CoA = 1-(9Z)-octadecenoyl-2-hexadecanoyl-sn-glycero-3-phosphate + CoA. The enzyme catalyses 1-(9Z-octadecenoyl)-sn-glycero-3-phosphate + octadecanoyl-CoA = 1-(9Z-octadecenoyl)-2-octadecanoyl-sn-glycero-3-phosphate + CoA. It catalyses the reaction 1-acyl-sn-glycero-3-phospho-(1'-sn-glycerol) + (9Z)-octadecenoyl-CoA = 1-acyl-2-(9Z-octadecenoyl)-sn-glycero-3-phospho-(1'-sn-glycerol) + CoA. It carries out the reaction a 1-acyl-sn-glycero-3-phospho-(1D-myo-inositol) + (9Z)-octadecenoyl-CoA = a 1-acyl-2-(9Z-octadecenoyl)-sn-glycero-3-phospho-(1D-myo-inositol) + CoA. The catalysed reaction is 1-hexadecanoyl-sn-glycero-3-phospho-(1D-myo-inositol) + hexadecanoyl-CoA = 1,2-dihexadecanoyl-sn-glycero-3-phospho-(1D-myo-inositol) + CoA. The enzyme catalyses 1-hexadecanoyl-sn-glycero-3-phospho-(1D-myo-inositol) + octadecanoyl-CoA = 1-hexadecanoyl-2-octadecanoyl-sn-glycero-3-phospho-(1D-myo-inositol) + CoA. It catalyses the reaction 1-hexadecanoyl-sn-glycero-3-phospho-(1D-myo-inositol) + (9Z)-octadecenoyl-CoA = 1-hexadecanoyl-2-(9Z-octadecenoyl)-sn-glycero-3-phospho-(1D-myo-inositol) + CoA. It carries out the reaction 1-hexadecanoyl-sn-glycero-3-phospho-(1D-myo-inositol) + (9Z,12Z)-octadecadienoyl-CoA = 1-hexadecanoyl-2-(9Z,12Z-octadecadienoyl)-sn-glycero-3-phospho-(1D-myo-inositol) + CoA. The catalysed reaction is 1-hexadecanoyl-sn-glycero-3-phospho-(1D-myo-inositol) + (5Z,8Z,11Z,14Z)-eicosatetraenoyl-CoA = 1-hexadecanoyl-2-(5Z,8Z,11Z,14Z-eicosatetraenoyl)-sn-glycero-3-phospho-D-myo-inositol + CoA. The enzyme catalyses 1-hexadecanoyl-sn-glycero-3-phospho-(1'-sn-glycerol) + hexadecanoyl-CoA = 1,2-dihexadecanoyl-sn-glycero-3-phospho-(1'-sn-glycerol) + CoA. It catalyses the reaction 1-hexadecanoyl-sn-glycero-3-phospho-(1'-sn-glycerol) + octadecanoyl-CoA = 1-hexadecanoyl-2-octadecanoyl-sn-glycero-3-phospho-(1'-sn-glycerol) + CoA. It carries out the reaction 1-hexadecanoyl-sn-glycero-3-phospho-(1'-sn-glycerol) + (9Z)-octadecenoyl-CoA = 1-hexadecanoyl-2-(9Z-octadecenoyl)-sn-glycero-3-phospho-(1'-sn-glycerol) + CoA. The catalysed reaction is 1-hexadecanoyl-sn-glycero-3-phospho-(1'-sn-glycerol) + (9Z,12Z)-octadecadienoyl-CoA = 1-hexadecanoyl-2-(9Z,12Z-octadecadienoyl)-sn-glycero-3-phospho-(1'-sn-glycerol) + CoA. The enzyme catalyses 1-tetradecanoyl-sn-glycero-3-phospho-(1'-sn-glycerol) + (9Z)-octadecenoyl-CoA = 1-tetradecanoyl-2-(9Z-octadecenoyl)-sn-glycero-3-phospho-(1'-sn-glycerol) + CoA. It catalyses the reaction 1-octadecanoyl-sn-glycero-3-phospho-(1'-sn-glycerol) + (9Z)-octadecenoyl-CoA = 1-octadecanoyl-2-(9Z-octadecenoyl)-sn-glycero-3-phospho-(1'-sn-glycerol) + CoA. It carries out the reaction 1-(9Z-octadecenoyl)-sn-glycero-3-phospho-(1'-sn-glycerol) + (9Z)-octadecenoyl-CoA = 1,2-di-(9Z-octadecenoyl)-sn-glycero-3-phospho-(1'-sn-glycerol) + CoA. The catalysed reaction is 1-hexadecanoyl-sn-glycero-3-phospho-(1D-myo-inositol) + dodecanoyl-CoA = 1-hexadecanoyl-2-dodecanoyl-sn-glycero-3-phospho-(1D-myo-inositol) + CoA. The enzyme catalyses 1',3'-bis-[1-acyl-sn-glycero-3-phospho]-glycerol + (9Z)-octadecenoyl-CoA = 1'-[1-acyl-2-(9Z)-octadecenoyl-sn-glycero-3-phospho],3'-[1-acyl,2-hydroxy-sn-glycero-3-phospho]-glycerol + CoA. It catalyses the reaction 1'-[1,2-diacyl-sn-glycero-3-phospho],3'-[1-acyl-sn-glycero-3-phospho]-glycerol + (9Z)-octadecenoyl-CoA = 1'-[1,2-diacyl-sn-glycero-3-phospho],3'-[1-acyl,2-(9Z)-octadecenoyl-sn-glycero-3-phospho]-glycerol + CoA. It carries out the reaction 1'-[1,2-diacyl-sn-glycero-3-phospho],3'-[1-acyl-sn-glycero-3-phospho]-glycerol + (9Z,12Z)-octadecadienoyl-CoA = 1'-[1,2-diacyl-sn-glycero-3-phospho],3'-[1-acyl,2-(9Z,12Z)-octadecadienoyl-sn-glycero-3-phospho]-glycerol + CoA. The catalysed reaction is 1'-[1,2-diacyl-sn-glycero-3-phospho],3'-[1-acyl-sn-glycero-3-phospho]-glycerol + dodecanoyl-CoA = 1'-[1,2-diacyl-sn-glycero-3-phospho],3'-[1-acyl,2-dodecanoyl-sn-glycero-3-phospho]-glycerol + CoA. The enzyme catalyses 1',3'-bis-[1-acyl-sn-glycero-3-phospho]-glycerol + dodecanoyl-CoA = 1'-[1-acyl-2-dodecanoyl-sn-glycero-3-phospho],3'-[1-acyl,2-hydroxy-sn-glycero-3-phospho]-glycerol + CoA. It catalyses the reaction a 1-acyl-sn-glycero-3-phosphate + (9Z)-octadecenoyl-CoA = a 1-acyl-2-(9Z-octadecenoyl)-sn-glycero-3-phosphate + CoA. It carries out the reaction 1',3'-bis-[1-acyl-sn-glycero-3-phospho]-glycerol + (9Z,12Z)-octadecadienoyl-CoA = 1'-[1-acyl-2-(9Z,12Z)-octadecadienoyl-sn-glycero-3-phospho],3'-[1-acyl,2-hydroxy-sn-glycero-3-phospho]-glycerol + CoA. The catalysed reaction is 1',3'-bis-[1-acyl-sn-glycero-3-phospho]-glycerol + hexadecanoyl-CoA = 1'-[1-acyl-2-hexadecanoyl-sn-glycero-3-phospho],3'-[1-acyl,2-hydroxy-sn-glycero-3-phospho]-glycerol + CoA. The enzyme catalyses 1',3'-bis-[1-acyl-sn-glycero-3-phospho]-glycerol + octadecanoyl-CoA = 1'-[1-acyl-2-octadecanoyl-sn-glycero-3-phospho],3'-[1-acyl,2-hydroxy-sn-glycero-3-phospho]-glycerol + CoA. It catalyses the reaction 1'-[1,2-diacyl-sn-glycero-3-phospho],3'-[1-acyl-sn-glycero-3-phospho]-glycerol + octanoyl-CoA = 1'-[1,2-diacyl-sn-glycero-3-phospho],3'-[1-acyl,2-octanoyl-sn-glycero-3-phospho]-glycerol + CoA. It carries out the reaction 1',3'-bis-[1-acyl-sn-glycero-3-phospho]-glycerol + octanoyl-CoA = 1'-[1-acyl-2-octanoyl-sn-glycero-3-phospho],3'-[1-acyl,2-hydroxy-sn-glycero-3-phospho]-glycerol + CoA. The catalysed reaction is 1'-[1,2-diacyl-sn-glycero-3-phospho],3'-[1-acyl-sn-glycero-3-phospho]-glycerol + hexadecanoyl-CoA = 1'-[1,2-diacyl-sn-glycero-3-phospho],3'-[1-acyl,2-hexadecanoyl-sn-glycero-3-phospho]-glycerol + CoA. The enzyme catalyses 1'-[1,2-diacyl-sn-glycero-3-phospho],3'-[1-acyl-sn-glycero-3-phospho]-glycerol + (5Z,8Z,11Z,14Z)-eicosatetraenoyl-CoA = 1'-[1,2-diacyl-sn-glycero-3-phospho],3'-[1-acyl,2-(5Z,8Z,11Z,14Z)-eicosatetraenoyl-sn-glycero-3-phospho]-glycerol + CoA. It catalyses the reaction 1',3'-bis-[1-acyl-sn-glycero-3-phospho]-glycerol + (5Z,8Z,11Z,14Z)-eicosatetraenoyl-CoA = 1'-[1-acyl-2-(5Z,8Z,11Z,14Z)-eicosatetraenoyl-sn-glycero-3-phospho],3'-[1-acyl,2-hydroxy-sn-glycero-3-phospho]-glycerol + CoA. It carries out the reaction a 1-acyl-sn-glycero-3-phospho-(1D-myo-inositol) + octadecanoyl-CoA = a 1-acyl-2-octadecanoyl-sn-glycero-3-phospho-(1D-myo-inositol) + CoA. The catalysed reaction is a 2-acyl-sn-glycero-3-phospho-D-myo-inositol + octadecanoyl-CoA = 1-octadecanoyl-2-acyl-sn-glycero-3-phospho-1D-myo-inositol + CoA. It functions in the pathway phospholipid metabolism; CDP-diacylglycerol biosynthesis; CDP-diacylglycerol from sn-glycerol 3-phosphate: step 2/3. Its function is as follows. Exhibits acyl-CoA:lysocardiolipin acyltransferase (ALCAT) activity; catalyzes the reacylation of lyso-cardiolipin to cardiolipin (CL), a key step in CL remodeling. Recognizes both monolysocardiolipin and dilysocardiolipin as substrates with a preference for linoleoyl-CoA and oleoyl-CoA as acyl donors. Also exhibits 1-acyl-sn-glycerol-3-phosphate acyltransferase activity (AGPAT) activity; converts 1-acyl-sn-glycerol-3- phosphate (lysophosphatidic acid or LPA) into 1,2-diacyl-sn-glycerol-3- phosphate (phosphatidic acid or PA) by incorporating an acyl moiety at the sn-2 position of the glycerol backbone. Possesses both lysophosphatidylinositol acyltransferase (LPIAT) and lysophosphatidylglycerol acyltransferase (LPGAT) activities. Required for establishment of the hematopoietic and endothelial lineages. The sequence is that of Lysocardiolipin acyltransferase 1 (LCLAT1) from Gallus gallus (Chicken).